Here is a 233-residue protein sequence, read N- to C-terminus: DnaA regulatory inactivator Hda (233 aa).

Belongs to the DnaA family. HdA subfamily. The active form seems to be an ADP-bound monomer. Forms the RIDA complex (regulatory inactivation of DnaA) of ATP-DnaA, ADP-Hda and the DNA-loaded beta sliding clamp (dnaN).

Its function is as follows. Mediates the interaction of DNA replication initiator protein DnaA with DNA polymerase subunit beta sliding clamp (dnaN). Stimulates hydrolysis of ATP-DnaA to ADP-DnaA, rendering DnaA inactive for reinitiation, a process called regulatory inhibition of DnaA or RIDA. In Shigella boydii serotype 4 (strain Sb227), this protein is DnaA regulatory inactivator Hda.